Here is a 637-residue protein sequence, read N- to C-terminus: 3D-(3,5/4)-trihydroxycyclohexane-1,2-dione hydrolase (637 aa).

Glu66 is a binding site for thiamine diphosphate. A thiamine pyrophosphate binding region spans residues 442-522 (SLPGDLQRLW…INVLLFDNSG (81 aa)). Mg(2+)-binding residues include Asp493 and Asn520.

It belongs to the TPP enzyme family. Mg(2+) serves as cofactor. The cofactor is thiamine diphosphate.

The enzyme catalyses 3D-3,5/4-trihydroxycyclohexane-1,2-dione + H2O = 5-deoxy-D-glucuronate + H(+). Its pathway is polyol metabolism; myo-inositol degradation into acetyl-CoA; acetyl-CoA from myo-inositol: step 3/7. Involved in the cleavage of the C1-C2 bond of 3D-(3,5/4)-trihydroxycyclohexane-1,2-dione (THcHDO) to yield 5-deoxy-glucuronate (5DG). The polypeptide is 3D-(3,5/4)-trihydroxycyclohexane-1,2-dione hydrolase (Bacillus velezensis (strain DSM 23117 / BGSC 10A6 / LMG 26770 / FZB42) (Bacillus amyloliquefaciens subsp. plantarum)).